The following is a 303-amino-acid chain: Phosphatidylglycerol--prolipoprotein diacylglyceryl transferase (303 aa).

The next 3 membrane-spanning stretches (helical) occupy residues 18–38 (VGFF…LIGL), 58–78 (LLPI…VIFE), and 107–127 (WQGG…ILIF). Arg-154 is an a 1,2-diacyl-sn-glycero-3-phospho-(1'-sn-glycerol) binding site. Transmembrane regions (helical) follow at residues 193 to 213 (PTFL…ISLI) and 266 to 286 (IAQL…FWIY).

Belongs to the Lgt family.

Its subcellular location is the cell inner membrane. The enzyme catalyses L-cysteinyl-[prolipoprotein] + a 1,2-diacyl-sn-glycero-3-phospho-(1'-sn-glycerol) = an S-1,2-diacyl-sn-glyceryl-L-cysteinyl-[prolipoprotein] + sn-glycerol 1-phosphate + H(+). Its pathway is protein modification; lipoprotein biosynthesis (diacylglyceryl transfer). Its function is as follows. Catalyzes the transfer of the diacylglyceryl group from phosphatidylglycerol to the sulfhydryl group of the N-terminal cysteine of a prolipoprotein, the first step in the formation of mature lipoproteins. This is Phosphatidylglycerol--prolipoprotein diacylglyceryl transferase from Prochlorococcus marinus (strain MIT 9211).